Reading from the N-terminus, the 85-residue chain is Toxin BmKITc (85 aa).

Residues 1 to 21 (MKLFLLLVIFASMLNDGLVNA) form the signal peptide. The LCN-type CS-alpha/beta domain maps to 22–82 (DGYIRGSDGC…KWKYESNTCG (61 aa)). Disulfide bonds link cysteine 31/cysteine 81, cysteine 35/cysteine 56, cysteine 42/cysteine 63, and cysteine 46/cysteine 65.

The protein belongs to the long (4 C-C) scorpion toxin superfamily. Sodium channel inhibitor family. Beta subfamily. As to expression, expressed by the venom gland.

The protein localises to the secreted. Depressant insect beta-toxins cause a transient contraction paralysis followed by a slow flaccid paralysis. They bind voltage-independently at site-4 of sodium channels (Nav) and shift the voltage of activation toward more negative potentials thereby affecting sodium channel activation and promoting spontaneous and repetitive firing. This is Toxin BmKITc from Olivierus martensii (Manchurian scorpion).